Consider the following 112-residue polypeptide: Nitrogen regulatory protein P-II (112 aa).

Tyrosine 51 carries the post-translational modification O-UMP-tyrosine.

This sequence belongs to the P(II) protein family. In terms of assembly, homotrimer.

In nitrogen-limiting conditions, when the ratio of Gln to 2-ketoglutarate decreases, P-II is uridylylated to P-II-UMP. P-II-UMP allows the deadenylation of glutamine synthetase (GS), thus activating the enzyme. Conversely, in nitrogen excess P-II is deuridylated and promotes the adenylation of GS. P-II indirectly controls the transcription of the GS gene (glnA). P-II prevents NR-II-catalyzed conversion of NR-I to NR-I-phosphate, the transcriptional activator of glnA. When P-II is uridylylated to P-II-UMP, these events are reversed. The chain is Nitrogen regulatory protein P-II (glnB) from Klebsiella oxytoca.